The following is a 506-amino-acid chain: MELDECSPSIFIISFIFIAISIAILRRIRPKKTKALPPGPWKLPLIGNLHQFISRDSLPYKILRDLAQKHGPLMHLQLGEVSAVVASSPEMAKVITRTKDLEFADKPAIRAIRIVTYDYLDIAFNSYGKYWREMRKIFVQELLTPKRVRSFWSAREDVFSNLVKTINSANGKSINLTKLISSTTNSIINRVALGNVPYEREIFMELIKQLLTAAGGFKLVDLFPSYKIIHVLEGTERKLWKILGKIDKILDKVIDEHRENLLRTGKGSGENGQEDIVDILLKIEDGGELDHDIPFGNNNIKALLFDIISGGSDTSSTTIDWAMSEMMKNPQVMSKAQKEIREAFNGKKKIDENDVQNLKYLKSVIQETLRLHPPAAFLMRQCREECEIGGYHIPVGTKVFINIWAMGRDPEHWPNPESFIPERFENIPYDFTGSEHQLATFPFGSGRRICPGISFGLANVELSLALLLYHFNWQLPDSSTDLDMTEAIGIAARRKYDLHLIPTSYM.

Residues 1 to 4 (MELD) are Lumenal-facing. A helical membrane pass occupies residues 5–25 (ECSPSIFIISFIFIAISIAIL). Over 26–506 (RRIRPKKTKA…DLHLIPTSYM (481 aa)) the chain is Cytoplasmic. Cysteine 450 is a heme binding site.

It belongs to the cytochrome P450 family. It depends on heme as a cofactor. As to expression, accumulates progressively in roots.

Its subcellular location is the endoplasmic reticulum membrane. The enzyme catalyses (+)-vincadifformine + reduced [NADPH--hemoprotein reductase] + O2 = (+)-minovincinine + oxidized [NADPH--hemoprotein reductase] + H2O + H(+). It participates in alkaloid biosynthesis. With respect to regulation, the enantiomer (-)-vincadifformine acts as a competitive inhibitor. Component of the monoterpenoid indole alkaloids (MIAs, e.g. echitovenine, tabersonine, lochnericine, 19-hydroxytabersonine and horhammericine) biosynthetic pathway; MIAs are used in cancer treatment and other medical applications. Cytochrome P450 catalyzing the hydroxylation of (+)-vincadifformine to (+)-minovincinine. The polypeptide is (+)-vincadifformine 19-hydroxylase (Catharanthus roseus (Madagascar periwinkle)).